The sequence spans 201 residues: Sec-independent protein translocase protein TatB (201 aa).

The chain crosses the membrane as a helical span at residues 1-21 (MLDLGWSEILVIAVVLIVVVG). Residues 96–201 (LSEAAKAKPA…RRKKTAGTAP (106 aa)) form a disordered region. Low complexity-rich tracts occupy residues 102–114 (AKPA…AADS) and 159–187 (TSAK…APAK). The segment covering 189–201 (PSPRRKKTAGTAP) has biased composition (basic residues).

It belongs to the TatB family. The Tat system comprises two distinct complexes: a TatABC complex, containing multiple copies of TatA, TatB and TatC subunits, and a separate TatA complex, containing only TatA subunits. Substrates initially bind to the TatABC complex, which probably triggers association of the separate TatA complex to form the active translocon.

It localises to the cell inner membrane. In terms of biological role, part of the twin-arginine translocation (Tat) system that transports large folded proteins containing a characteristic twin-arginine motif in their signal peptide across membranes. Together with TatC, TatB is part of a receptor directly interacting with Tat signal peptides. TatB may form an oligomeric binding site that transiently accommodates folded Tat precursor proteins before their translocation. The protein is Sec-independent protein translocase protein TatB of Chelativorans sp. (strain BNC1).